The primary structure comprises 387 residues: Cyclin-J-like protein (387 aa).

Residues 13 to 142 (DVHCTLREKE…LLEAFSWDLC (130 aa)) form the Cyclin N-terminal domain.

It belongs to the cyclin family. Cyclin J subfamily.

This Mus musculus (Mouse) protein is Cyclin-J-like protein (Ccnjl).